A 642-amino-acid chain; its full sequence is Tigger transposable element derived 5 (642 aa).

The tract at residues 1–54 (MYPASPSAGPALHPVPHRARLPRPRCLAEPPRSPAPGPGSTARPPPPAPGPRPR) is disordered. A compositionally biased stretch (pro residues) spans 31–52 (PRSPAPGPGSTARPPPPAPGPR). The region spanning 56–107 (AVKMTFRKAYSIKDKLQAIERVKGGERQASVCRDFGVPGGTLRGWLKDEPKL) is the HTH psq-type domain. 2 consecutive DNA-binding regions (H-T-H motif) follow at residues 83 to 103 (QASV…WLKD) and 154 to 187 (PVIQ…WQKR). An HTH CENPB-type domain is found at 121-194 (QRKKMRLANE…QKRHGISSQR (74 aa)). The segment covering 198–208 (EAEPPVAGPAP) has biased composition (low complexity). Residues 198–230 (EAEPPVAGPAPVKEEPAQPSSAGLLLDGTPATL) are disordered. Residues 239–364 (DEQIYNANVT…CLQQKAVLLV (126 aa)) enclose the DDE-1 domain. The segment at 543-583 (GLPEGCGEEVAPAAPPSPASLPSSIGAGEEEEEEATEQGGV) is disordered.

The protein belongs to the tigger transposable element derived protein family.

The protein resides in the nucleus. In Rattus norvegicus (Rat), this protein is Tigger transposable element derived 5 (Tigd5).